Reading from the N-terminus, the 344-residue chain is DNA polymerase IV (344 aa).

Residues 2 to 183 (IMLIDFDYFF…IKINDIPGIG (182 aa)) form the UmuC domain. Residues D6 and D105 each coordinate Mg(2+). E106 is a catalytic residue.

This sequence belongs to the DNA polymerase type-Y family. Monomer. Mg(2+) is required as a cofactor.

The protein localises to the cytoplasm. The enzyme catalyses DNA(n) + a 2'-deoxyribonucleoside 5'-triphosphate = DNA(n+1) + diphosphate. In terms of biological role, poorly processive, error-prone DNA polymerase involved in untargeted mutagenesis. Copies undamaged DNA at stalled replication forks, which arise in vivo from mismatched or misaligned primer ends. These misaligned primers can be extended by PolIV. Exhibits no 3'-5' exonuclease (proofreading) activity. May be involved in translesional synthesis. The chain is DNA polymerase IV from Picrophilus torridus (strain ATCC 700027 / DSM 9790 / JCM 10055 / NBRC 100828 / KAW 2/3).